The chain runs to 314 residues: MFKRTVILLAGPTGSGKTAVSLKLAPLVDGEIISVDSMQVYQGMDIGTAKVSLAIRQAVPHHLIDICHVQETFNAVDFYYHAIQACQDILSRNKVPILVGGTGFYFHTFLSGPPSGPSPDFALREQLSLEAQERGIGALYQELVELDSAYAATITKHDKNKIIRALEIIRKTGNKVSSYSWESTVNESKEYHCRGWLLSPDPELLRHNILERCDQMLEEGLVDEVRSLVALGIKGNTSASRAIGYREWIEFLDAGSPVERFEDTKQKFITNTWRYTKKQRTWFKRYPLFRELSPMGMTLGDIARKIAQDYFLCG.

11–18 (GPTGSGKT) is an ATP binding site. 13–18 (TGSGKT) contributes to the substrate binding site. The segment at 36 to 39 (DSMQ) is interaction with substrate tRNA.

It belongs to the IPP transferase family. As to quaternary structure, monomer. Requires Mg(2+) as cofactor.

It carries out the reaction adenosine(37) in tRNA + dimethylallyl diphosphate = N(6)-dimethylallyladenosine(37) in tRNA + diphosphate. Functionally, catalyzes the transfer of a dimethylallyl group onto the adenine at position 37 in tRNAs that read codons beginning with uridine, leading to the formation of N6-(dimethylallyl)adenosine (i(6)A). The chain is tRNA dimethylallyltransferase from Chlamydia muridarum (strain MoPn / Nigg).